Reading from the N-terminus, the 251-residue chain is Vacuolar protein sorting-associated protein 37D (251 aa).

A VPS37 C-terminal domain is found at 93-182; the sequence is AENCADKLQR…RRRERSAQPA (90 aa). The segment at 174 to 251 is disordered; the sequence is RRERSAQPAP…RPSQPEPPHR (78 aa). The segment covering 221-251 has biased composition (pro residues); sequence PVPPLKGSPGCPLGPAPLLSPRPSQPEPPHR.

This sequence belongs to the VPS37 family. As to quaternary structure, component of the ESCRT-I complex (endosomal sorting complex required for transport I) which consists of TSG101, VPS28, a VPS37 protein (VPS37A to -D) and MVB12A or MVB12B in a 1:1:1:1 stoichiometry. Interacts with TSG101 and MVB12A. Component of the ESCRT-I complex (endosomal sorting complex required for transport I) which consists of TSG101, VPS28, a VPS37 protein (VPS37A to -D) and UBAP1 in a 1:1:1:1 stoichiometry.

The protein localises to the late endosome membrane. Component of the ESCRT-I complex, a regulator of vesicular trafficking process. Required for the sorting of endocytic ubiquitinated cargos into multivesicular bodies. May be involved in cell growth and differentiation. The protein is Vacuolar protein sorting-associated protein 37D of Homo sapiens (Human).